Consider the following 761-residue polypeptide: Subtilisin-like protease SBT3 (761 aa).

Positions 1–22 (MELLHLLLFSWALSAHLFLALA) are cleaved as a signal peptide. Residues 23 to 112 (QRSTYIVHLD…AYKDRTVEPH (90 aa)) constitute a propeptide that is removed on maturation. One can recognise an Inhibitor I9 domain in the interval 26 to 110 (TYIVHLDKSL…ISAYKDRTVE (85 aa)). Residues 116 to 606 (TSDFLKLNPS…AGHVDPNRAL (491 aa)) enclose the Peptidase S8 domain. Asp144 serves as the catalytic Charge relay system. Cys170 and Cys181 are joined by a disulfide. Residues Asn177 and Asn203 are each glycosylated (N-linked (GlcNAc...) (complex) asparagine; alternate). N-linked (GlcNAc...) (paucimannose) asparagine; alternate glycans are attached at residues Asn177 and Asn203. His215 acts as the Charge relay system in catalysis. Residue Asn376 is glycosylated (N-linked (GlcNAc...) (paucimannose) asparagine; partial). Cys382 and Cys401 form a disulfide bridge. The active-site Charge relay system is the Ser538. The disordered stretch occupies residues 574–598 (LDNTRKPIKDSDNNKAATPLDMGAG). Over residues 575–586 (DNTRKPIKDSDN) the composition is skewed to basic and acidic residues. Cysteines 624 and 645 form a disulfide. Residues Asn697 and Asn745 are each glycosylated (N-linked (GlcNAc...) (complex) asparagine; alternate). Asn697 and Asn745 each carry an N-linked (GlcNAc...) (paucimannose) asparagine; alternate glycan. Residues 756–761 (PIIEVW) are necessary for prodomain cleavage and secretion.

Belongs to the peptidase S8 family. In terms of assembly, homodimer. In terms of processing, propeptide is internally cleaved at Asn-38 and Asp-52 in a pH-dependent manner leading to the dissociation of the propeptide from the catalytic domain and resulting in the release of the active subtilase. Cleavage occurs at pH 5.7 and to a stronger extent at pH 5.2. In terms of tissue distribution, expressed in flowers, cotyledons and leaves with the highest expression in roots.

Its subcellular location is the secreted. With respect to regulation, inhibited by 1 mM 4-(2-aminoethyl)-benzenesulfonyl fluoride (AEBSF), a general inhibitor of serine proteinases, but not by the more selective serine protease inhibitors N-alpha-tosyl-L-lysinyl-chloromethylketone (TLCK), N-tosyl-L-phenylalaninyl-chloromethylketone (TPCK), leupeptin, aprotinin or benzamidine. Its proteolytic activity is autoinhibited by the non-covalent binding of the propeptide to the catalytic domain. No effect on activity by the addition of CaCl(2) or calcium chelators. Its function is as follows. Serine protease. Has preference for Gln in the P1 position and Lys in the P2 position of oligopeptide substrates. Active also with His in the P1 position. Involved in resistance against insects partly by regulating expression of systemic wound response genes and possibly by its post-ingestive activity in the insect gut. Apart from the role in defense, may be involved in regulation of pectin methylesterases (PMEs) activity and pectin methylesterification of the cell wall. The chain is Subtilisin-like protease SBT3 from Solanum lycopersicum (Tomato).